The following is a 374-amino-acid chain: Methylthioribose-1-phosphate isomerase (374 aa).

The active-site Proton donor is D256.

This sequence belongs to the eIF-2B alpha/beta/delta subunits family. MtnA subfamily.

The protein localises to the cytoplasm. Its subcellular location is the nucleus. The enzyme catalyses 5-(methylsulfanyl)-alpha-D-ribose 1-phosphate = 5-(methylsulfanyl)-D-ribulose 1-phosphate. The protein operates within amino-acid biosynthesis; L-methionine biosynthesis via salvage pathway; L-methionine from S-methyl-5-thio-alpha-D-ribose 1-phosphate: step 1/6. Its function is as follows. Catalyzes the interconversion of methylthioribose-1-phosphate (MTR-1-P) into methylthioribulose-1-phosphate (MTRu-1-P). This is Methylthioribose-1-phosphate isomerase from Leishmania braziliensis.